We begin with the raw amino-acid sequence, 692 residues long: Elongation factor G (692 aa).

The tr-type G domain maps to 8–283; sequence DRYRNIGIMA…AVVDFLPSPL (276 aa). Residues 17 to 24, 81 to 85, and 135 to 138 contribute to the GTP site; these read AHIDAGKT, DTPGH, and NKMD.

Belongs to the TRAFAC class translation factor GTPase superfamily. Classic translation factor GTPase family. EF-G/EF-2 subfamily.

The protein localises to the cytoplasm. In terms of biological role, catalyzes the GTP-dependent ribosomal translocation step during translation elongation. During this step, the ribosome changes from the pre-translocational (PRE) to the post-translocational (POST) state as the newly formed A-site-bound peptidyl-tRNA and P-site-bound deacylated tRNA move to the P and E sites, respectively. Catalyzes the coordinated movement of the two tRNA molecules, the mRNA and conformational changes in the ribosome. The polypeptide is Elongation factor G (Rhodospirillum rubrum (strain ATCC 11170 / ATH 1.1.1 / DSM 467 / LMG 4362 / NCIMB 8255 / S1)).